A 1005-amino-acid polypeptide reads, in one-letter code: Isoleucine--tRNA ligase (1005 aa).

A 'HIGH' region motif is present at residues 70-80; the sequence is PYANGNIHIGH. An L-isoleucyl-5'-AMP-binding site is contributed by glutamate 629. The 'KMSKS' region signature appears at 670-674; it reads KMSKS. Residue lysine 673 participates in ATP binding.

This sequence belongs to the class-I aminoacyl-tRNA synthetase family. IleS type 1 subfamily. Monomer.

The protein resides in the cytoplasm. The catalysed reaction is tRNA(Ile) + L-isoleucine + ATP = L-isoleucyl-tRNA(Ile) + AMP + diphosphate. Functionally, catalyzes the attachment of isoleucine to tRNA(Ile). As IleRS can inadvertently accommodate and process structurally similar amino acids such as valine, to avoid such errors it has two additional distinct tRNA(Ile)-dependent editing activities. One activity is designated as 'pretransfer' editing and involves the hydrolysis of activated Val-AMP. The other activity is designated 'posttransfer' editing and involves deacylation of mischarged Val-tRNA(Ile). The sequence is that of Isoleucine--tRNA ligase from Rhodopseudomonas palustris (strain ATCC BAA-98 / CGA009).